We begin with the raw amino-acid sequence, 326 residues long: 3-isopropylmalate dehydrogenase (326 aa).

Residues Arg81, Arg91, Arg112, and Asp198 each contribute to the substrate site. Residues Asp198, Asp222, and Asp226 each contribute to the Mg(2+) site. An NAD(+)-binding site is contributed by 255-267; it reads GAAFDIAGKGIAN.

This sequence belongs to the isocitrate and isopropylmalate dehydrogenases family. Homotetramer. Mg(2+) is required as a cofactor. Mn(2+) serves as cofactor.

Its subcellular location is the cytoplasm. It carries out the reaction (2R,3S)-3-isopropylmalate + NAD(+) = 4-methyl-2-oxopentanoate + CO2 + NADH. It participates in amino-acid biosynthesis; L-leucine biosynthesis; L-leucine from 3-methyl-2-oxobutanoate: step 3/4. In terms of biological role, catalyzes the oxidation of 3-carboxy-2-hydroxy-4-methylpentanoate (3-isopropylmalate) to 3-carboxy-4-methyl-2-oxopentanoate. The product decarboxylates to 4-methyl-2 oxopentanoate. In Archaeoglobus fulgidus (strain ATCC 49558 / DSM 4304 / JCM 9628 / NBRC 100126 / VC-16), this protein is 3-isopropylmalate dehydrogenase (leuB).